The sequence spans 65 residues: UPF0337 protein gbs1203 (65 aa).

A compositionally biased stretch (basic and acidic residues) spans 1–12; the sequence is MSEEKFDAKVDK. The interval 1 to 29 is disordered; that stretch reads MSEEKFDAKVDKVSGSVKESVGKLTGDKE.

The protein belongs to the UPF0337 (CsbD) family.

The polypeptide is UPF0337 protein gbs1203 (Streptococcus agalactiae serotype III (strain NEM316)).